Reading from the N-terminus, the 295-residue chain is Pyridoxal 5'-phosphate synthase subunit PdxS (295 aa).

D-ribose 5-phosphate is bound at residue Asp-25. Lys-82 serves as the catalytic Schiff-base intermediate with D-ribose 5-phosphate. Gly-154 is a binding site for D-ribose 5-phosphate. D-glyceraldehyde 3-phosphate is bound at residue Arg-166. Residues Gly-215 and 236–237 (GS) each bind D-ribose 5-phosphate.

This sequence belongs to the PdxS/SNZ family. In the presence of PdxT, forms a dodecamer of heterodimers.

It carries out the reaction aldehydo-D-ribose 5-phosphate + D-glyceraldehyde 3-phosphate + L-glutamine = pyridoxal 5'-phosphate + L-glutamate + phosphate + 3 H2O + H(+). The protein operates within cofactor biosynthesis; pyridoxal 5'-phosphate biosynthesis. Catalyzes the formation of pyridoxal 5'-phosphate from ribose 5-phosphate (RBP), glyceraldehyde 3-phosphate (G3P) and ammonia. The ammonia is provided by the PdxT subunit. Can also use ribulose 5-phosphate and dihydroxyacetone phosphate as substrates, resulting from enzyme-catalyzed isomerization of RBP and G3P, respectively. The polypeptide is Pyridoxal 5'-phosphate synthase subunit PdxS (Actinobacillus pleuropneumoniae serotype 3 (strain JL03)).